A 347-amino-acid polypeptide reads, in one-letter code: Olfactory receptor 2M2 (347 aa).

Residues 1–25 (MAWENQTFNSDFILLGIFNHSPPHT) are Extracellular-facing. Asn5 carries N-linked (GlcNAc...) asparagine glycosylation. Residues 26 to 49 (FLFFLVLGIFLVAFMGNSVMVLLI) form a helical membrane-spanning segment. At 50–57 (YLDTQLHT) the chain is on the cytoplasmic side. A helical transmembrane segment spans residues 58–79 (PMYFLLSQLSLMDLMLICTTVP). Over 80-100 (KMAFNYLSGSKSISMAGCVTQ) the chain is Extracellular. Residues Cys97 and Cys189 are joined by a disulfide bond. A helical membrane pass occupies residues 101–120 (IFFYISLSGSECFLLAVMAY). The Cytoplasmic portion of the chain corresponds to 121 to 139 (DRYIAICHPLRYTNLMNPK). Residues 140–158 (ICGLMATFSWILGSTDGII) form a helical membrane-spanning segment. Over 159 to 195 (DAVATFSFSFCGSREIAHFFCEFPSLLILSCNDTSIF) the chain is Extracellular. A glycan (N-linked (GlcNAc...) asparagine) is linked at Asn190. Residues 196-219 (EEVIFICCIVMLVFPVAIIIASYA) traverse the membrane as a helical segment. Residues 220 to 236 (RVILAVIHMGSGEGRCK) are Cytoplasmic-facing. Residues 237–259 (AFTTCSSHLMVVGMYYGAALFMY) form a helical membrane-spanning segment. At 260 to 272 (IRPTSDHSPTQDK) the chain is on the extracellular side. The helical transmembrane segment at 273 to 292 (MVSVFYTILTPMLNPLIYSL) threads the bilayer. Residues 293–347 (RNKEVTRAFMKILGKGKSESELPHKLYVLLFAKFFFLISIFFYDVKILALIMYIA) lie on the Cytoplasmic side of the membrane.

This sequence belongs to the G-protein coupled receptor 1 family.

The protein localises to the cell membrane. In terms of biological role, odorant receptor. The chain is Olfactory receptor 2M2 (OR2M2) from Homo sapiens (Human).